A 638-amino-acid chain; its full sequence is Chaperone protein HtpG (638 aa).

Residues 1–343 (MTSTIDSDGA…SADLPLNISR (343 aa)) form an a; substrate-binding region. Residues 344–557 (EMIQESPILA…ESGPDRQLEK (214 aa)) are b. The c stretch occupies residues 558–638 (ILVGVGQLTG…VERGLRGSTA (81 aa)).

Belongs to the heat shock protein 90 family. Homodimer.

The protein resides in the cytoplasm. In terms of biological role, molecular chaperone. Has ATPase activity. The protein is Chaperone protein HtpG of Nitrobacter hamburgensis (strain DSM 10229 / NCIMB 13809 / X14).